The primary structure comprises 295 residues: Mediator of RNA polymerase II transcription subunit 6 (295 aa).

Residues 211 to 243 (TATAATNGNNAGGGSNKSSVRPTGGANMATVPS) form a disordered region. Position 225 is a phosphoserine (Ser225).

Belongs to the Mediator complex subunit 6 family. Component of the Mediator complex, which is composed of at least 21 subunits that form three structurally distinct submodules. The Mediator head module contains MED6, MED8, MED11, SRB4/MED17, SRB5/MED18, ROX3/MED19, SRB2/MED20 and SRB6/MED22, the middle module contains MED1, MED4, NUT1/MED5, MED7, CSE2/MED9, NUT2/MED10, SRB7/MED21 and SOH1/MED31, and the tail module contains MED2, PGD1/MED3, RGR1/MED14, GAL11/MED15 and SIN4/MED16. The head and the middle modules interact directly with RNA polymerase II, whereas the elongated tail module interacts with gene-specific regulatory proteins. MED6 interacts directly with SRB4/MED17 and SRB7/MED21.

The protein localises to the nucleus. Functionally, component of the Mediator complex, a coactivator involved in the regulated transcription of nearly all RNA polymerase II-dependent genes. Mediator functions as a bridge to convey information from gene-specific regulatory proteins to the basal RNA polymerase II transcription machinery. The Mediator complex, having a compact conformation in its free form, is recruited to promoters by direct interactions with regulatory proteins and serves for the assembly of a functional preinitiation complex with RNA polymerase II and the general transcription factors. The Mediator complex unfolds to an extended conformation and partially surrounds RNA polymerase II, specifically interacting with the unphosphorylated form of the C-terminal domain (CTD) of RNA polymerase II. The Mediator complex dissociates from the RNA polymerase II holoenzyme and stays at the promoter when transcriptional elongation begins. The protein is Mediator of RNA polymerase II transcription subunit 6 (MED6) of Saccharomyces cerevisiae (strain ATCC 204508 / S288c) (Baker's yeast).